The chain runs to 228 residues: Geranylgeranylglyceryl phosphate synthase (228 aa).

K11 provides a ligand contact to sn-glycerol 1-phosphate. The Mg(2+) site is built by D13 and T39. Residues 159–164 (YIEYSG), G189, and 209–210 (GN) each bind sn-glycerol 1-phosphate.

The protein belongs to the GGGP/HepGP synthase family. Group I subfamily. Requires Mg(2+) as cofactor.

It localises to the cytoplasm. The catalysed reaction is sn-glycerol 1-phosphate + (2E,6E,10E)-geranylgeranyl diphosphate = sn-3-O-(geranylgeranyl)glycerol 1-phosphate + diphosphate. It functions in the pathway membrane lipid metabolism; glycerophospholipid metabolism. Functionally, prenyltransferase that catalyzes the transfer of the geranylgeranyl moiety of geranylgeranyl diphosphate (GGPP) to the C3 hydroxyl of sn-glycerol-1-phosphate (G1P). This reaction is the first ether-bond-formation step in the biosynthesis of archaeal membrane lipids. This chain is Geranylgeranylglyceryl phosphate synthase, found in Methanoregula boonei (strain DSM 21154 / JCM 14090 / 6A8).